Here is an 81-residue protein sequence, read N- to C-terminus: UPF0434 protein msl4429 (81 aa).

It belongs to the UPF0434 family.

The chain is UPF0434 protein msl4429 from Mesorhizobium japonicum (strain LMG 29417 / CECT 9101 / MAFF 303099) (Mesorhizobium loti (strain MAFF 303099)).